Reading from the N-terminus, the 514-residue chain is Cytidine and dCMP deaminase domain-containing protein 1 (514 aa).

Composition is skewed to polar residues over residues 1-11 (MKEAGQMQNLE) and 18-27 (SVSTQTGSMT). Disordered stretches follow at residues 1-27 (MKEAGQMQNLESARAGRSVSTQTGSMT) and 55-83 (RQKSQKNEEGKHGPLGDNEERTRVSTDKR). The span at 59-83 (QKNEEGKHGPLGDNEERTRVSTDKR) shows a compositional bias: basic and acidic residues. The region spanning 70–168 (GDNEERTRVS…SLLTEASSSE (99 aa)) is the CMP/dCMP-type deaminase 1 domain. Residues histidine 109, cysteine 134, and cysteine 137 each coordinate Zn(2+). The Nuclear export signal motif lies at 271-283 (NLRQNMKDLILLL). The CMP/dCMP-type deaminase 2 domain occupies 317–482 (EIARHCMVQA…LNPSGAYGLE (166 aa)). Histidine 398 is a Zn(2+) binding site. Residue glutamate 400 is the Proton donor of the active site. Zn(2+)-binding residues include cysteine 426 and cysteine 429. The segment at 480–514 (GLEQNEPERRENGVLRPVPQKEEQHQDKKLRLGIH) is disordered. A compositionally biased stretch (basic and acidic residues) spans 485-514 (EPERRENGVLRPVPQKEEQHQDKKLRLGIH). A Bipartite nuclear localization signal motif is present at residues 488-510 (RRENGVLRPVPQKEEQHQDKKLR).

The protein belongs to the cytidine and deoxycytidylate deaminase family. Requires Zn(2+) as cofactor. As to expression, widely expressed. Expressed at high levels in the testis.

Its subcellular location is the cytoplasm. It is found in the nucleus. It catalyses the reaction 2'-deoxycytidine + H2O + H(+) = 2'-deoxyuridine + NH4(+). The enzyme catalyses cytidine + H2O + H(+) = uridine + NH4(+). Catalyzes the deamination of cytidine and deoxycytidine into uridine and deoxyuridine, respectively. May play an important role in testicular development and spermatogenesis. The polypeptide is Cytidine and dCMP deaminase domain-containing protein 1 (CDADC1) (Homo sapiens (Human)).